The sequence spans 182 residues: Troponin I, fast skeletal muscle (182 aa).

Residue Gly2 is modified to N-acetylglycine. An involved in binding TNC region spans residues 2-48 (GDEEKRNRAITARRQHLKSVMLQIAATELEKEESRRESEKENYLSEH). Thr12 carries the phosphothreonine modification. Residues 29 to 45 (ELEKEESRRESEKENYL) show a composition bias toward basic and acidic residues. The tract at residues 29–53 (ELEKEESRRESEKENYLSEHCPPLH) is disordered. An involved in binding TNC and actin region spans residues 97–117 (NQKLFDLRGKFKRPPLRRVRM). Position 118 is a phosphoserine (Ser118).

The protein belongs to the troponin I family. In terms of assembly, binds to actin and tropomyosin.

Functionally, troponin I is the inhibitory subunit of troponin, the thin filament regulatory complex which confers calcium-sensitivity to striated muscle actomyosin ATPase activity. This is Troponin I, fast skeletal muscle (Tnni2) from Mus musculus (Mouse).